The primary structure comprises 287 residues: Probable endonuclease 4 (287 aa).

Zn(2+) contacts are provided by His69, His109, Glu144, Asp178, His181, His215, Asp228, His230, and Glu260.

Belongs to the AP endonuclease 2 family. Zn(2+) serves as cofactor.

It carries out the reaction Endonucleolytic cleavage to 5'-phosphooligonucleotide end-products.. Functionally, endonuclease IV plays a role in DNA repair. It cleaves phosphodiester bonds at apurinic or apyrimidinic (AP) sites, generating a 3'-hydroxyl group and a 5'-terminal sugar phosphate. In Thermotoga neapolitana (strain ATCC 49049 / DSM 4359 / NBRC 107923 / NS-E), this protein is Probable endonuclease 4.